A 335-amino-acid polypeptide reads, in one-letter code: Atypical chemokine receptor 1 (335 aa).

Residues 1–62 (MGNCLHPAEL…CNLLDDSALP (62 aa)) are Extracellular-facing. N16, N26, and N32 each carry an N-linked (GlcNAc...) asparagine glycan. 2 disulfide bridges follow: C50-C275 and C128-C194. A helical membrane pass occupies residues 63 to 83 (FFILVSVLGILASGTVLFMFF). Residues 84–94 (RPLFHWQLCPG) are Cytoplasmic-facing. The chain crosses the membrane as a helical span at residues 95-115 (WPVLAQLAVGSALFSIVVPIL). At 116-128 (APGLGNTRSSALC) the chain is on the extracellular side. Residues 129–152 (SLGYCVWYGSAFAQALLLGCHASL) form a helical membrane-spanning segment. Topologically, residues 153–165 (GPKLGAGQVPGLT) are cytoplasmic. Residues 166–186 (LGLSVGLWGVAALLTLPITLA) form a helical membrane-spanning segment. Over 187–206 (SGASGGLCTPAYSMELKALQ) the chain is Extracellular. A helical membrane pass occupies residues 207–227 (ATHAVACLAVFVLLPLGLFGA). Over 228-243 (KGLKKALGMGPGPWMN) the chain is Cytoplasmic. The chain crosses the membrane as a helical span at residues 244–264 (ILWAWFIFWWPHGVVLGLDFL). Topologically, residues 265-286 (VRSKLLLLSTCLAQQALDLLLN) are extracellular. Residues 287–307 (LAEALAILHCVATPLLLALFC) traverse the membrane as a helical segment. Topologically, residues 308–335 (HQATRTLLPSLPLPEGWSSHLDTLGSES) are cytoplasmic.

It belongs to the G-protein coupled receptor 1 family. Atypical chemokine receptor subfamily. (Microbial infection) Interacts (via N-terminal extracellular domain) with Plasmodium knowlesi Duffy receptor alpha form (DBPalpha) (via region II).

It localises to the early endosome. It is found in the recycling endosome. The protein resides in the membrane. In terms of biological role, atypical chemokine receptor that controls chemokine levels and localization via high-affinity chemokine binding that is uncoupled from classic ligand-driven signal transduction cascades, resulting instead in chemokine sequestration, degradation, or transcytosis. Also known as interceptor (internalizing receptor) or chemokine-scavenging receptor or chemokine decoy receptor. Has a promiscuous chemokine-binding profile, interacting with inflammatory chemokines of both the CXC and the CC subfamilies but not with homeostatic chemokines. Acts as a receptor for chemokines including CCL2, CCL5, CCL7, CCL11, CCL13, CCL14, CCL17, CXCL5, CXCL6, IL8/CXCL8, CXCL11, GRO, RANTES, MCP-1 and TARC. May regulate chemokine bioavailability and, consequently, leukocyte recruitment through two distinct mechanisms: when expressed in endothelial cells, it sustains the abluminal to luminal transcytosis of tissue-derived chemokines and their subsequent presentation to circulating leukocytes; when expressed in erythrocytes, serves as blood reservoir of cognate chemokines but also as a chemokine sink, buffering potential surges in plasma chemokine levels. Its function is as follows. (Microbial infection) Acts as a receptor for the malaria parasite Plasmodium knowlesi. This is Atypical chemokine receptor 1 (ACKR1) from Macaca mulatta (Rhesus macaque).